Consider the following 211-residue polypeptide: tRNA (guanine-N(7)-)-methyltransferase (211 aa).

S-adenosyl-L-methionine contacts are provided by glutamate 43, glutamate 68, aspartate 95, and aspartate 117. Aspartate 117 is an active-site residue. Substrate-binding positions include lysine 121, aspartate 153, and 190–193 (TEYE).

It belongs to the class I-like SAM-binding methyltransferase superfamily. TrmB family.

The enzyme catalyses guanosine(46) in tRNA + S-adenosyl-L-methionine = N(7)-methylguanosine(46) in tRNA + S-adenosyl-L-homocysteine. It participates in tRNA modification; N(7)-methylguanine-tRNA biosynthesis. Functionally, catalyzes the formation of N(7)-methylguanine at position 46 (m7G46) in tRNA. The chain is tRNA (guanine-N(7)-)-methyltransferase from Staphylococcus saprophyticus subsp. saprophyticus (strain ATCC 15305 / DSM 20229 / NCIMB 8711 / NCTC 7292 / S-41).